The chain runs to 217 residues: Ribosomal RNA large subunit methyltransferase E (217 aa).

S-adenosyl-L-methionine-binding residues include glycine 71, tryptophan 73, aspartate 91, aspartate 107, and aspartate 132. Lysine 172 (proton acceptor) is an active-site residue.

The protein belongs to the class I-like SAM-binding methyltransferase superfamily. RNA methyltransferase RlmE family.

It localises to the cytoplasm. The enzyme catalyses uridine(2552) in 23S rRNA + S-adenosyl-L-methionine = 2'-O-methyluridine(2552) in 23S rRNA + S-adenosyl-L-homocysteine + H(+). Specifically methylates the uridine in position 2552 of 23S rRNA at the 2'-O position of the ribose in the fully assembled 50S ribosomal subunit. The chain is Ribosomal RNA large subunit methyltransferase E from Psychromonas ingrahamii (strain DSM 17664 / CCUG 51855 / 37).